Here is a 471-residue protein sequence, read N- to C-terminus: Methyltransferase OMS1, mitochondrial (471 aa).

The N-terminal 39 residues, 1–39 (MIVFRRFPTCLLHHIRQPASRSLLLESQRRSLSFTSYKY), are a transit peptide targeting the mitochondrion. Residues 40 to 103 (NSSHIDDDKS…AIARSEKFSK (64 aa)) are Mitochondrial matrix-facing. The chain crosses the membrane as a helical span at residues 104 to 123 (GMTKYMIGAYVIFLIYGLFF). Topologically, residues 124–471 (TKKLFAKDKE…LEPVPPVSKS (348 aa)) are mitochondrial intermembrane. The segment covering 450-463 (FEKKDDMASKKELE) has biased composition (basic and acidic residues). Positions 450–471 (FEKKDDMASKKELEPVPPVSKS) are disordered.

The protein belongs to the methyltransferase superfamily. METL family.

It is found in the mitochondrion inner membrane. In terms of biological role, mitochondrial methyltransferase which suppresses respiratory defects caused by OXA1 mutations when overexpressed. This chain is Methyltransferase OMS1, mitochondrial (OMS1), found in Saccharomyces cerevisiae (strain ATCC 204508 / S288c) (Baker's yeast).